A 395-amino-acid chain; its full sequence is Transcription termination/antitermination protein NusA (395 aa).

Residues 137–201 (NSVLMGQVIL…TKKGLLLELS (65 aa)) form the S1 motif domain. 2 KH domains span residues 243–291 (SHNS…TLAL) and 331–378 (KVRL…NENE).

The protein belongs to the NusA family. In terms of assembly, monomer. Binds directly to the core enzyme of the DNA-dependent RNA polymerase and to nascent RNA.

It localises to the cytoplasm. Its function is as follows. Participates in both transcription termination and antitermination. The chain is Transcription termination/antitermination protein NusA from Helicobacter pylori (strain J99 / ATCC 700824) (Campylobacter pylori J99).